A 37-amino-acid chain; its full sequence is M-oxotoxin-Ot2b (37 aa).

Expressed by the venom gland.

It is found in the secreted. Disrupts biological membranes, particularly those rich in phosphocholine. Has antimicrobial activity against Gram-negative bacterium E.coli, Gram-positive bacteria B.subtilis and S.aureus, and hemolytic activity against sheep, pig and guinea pig red blood cells. Has insecticidal activity against S.frugiperda ovarian cells by opening non-selective ion channels. Enhances the insecticidal activity of spider venom neurotoxic peptides. The polypeptide is M-oxotoxin-Ot2b (Oxyopes takobius (Lynx spider)).